The chain runs to 448 residues: Clusterin (448 aa).

An N-terminal signal peptide occupies residues 1-21 (MKILLLCVALLLIWDNGMVLG). Positions 77-80 (KKKK) match the Nuclear localization signal motif. Intrachain disulfides connect C101–C312, C112–C304, C115–C301, C120–C294, and C128–C284. An N-linked (GlcNAc...) asparagine glycan is attached at N102. The residue at position 132 (S132) is a Phosphoserine. N144, N290, N327, N353, and N373 each carry an N-linked (GlcNAc...) asparagine glycan. S395 is subject to Phosphoserine. Positions 442 to 446 (RRKSR) match the Nuclear localization signal motif.

This sequence belongs to the clusterin family. Antiparallel disulfide-linked heterodimer of an alpha chain and a beta chain. Self-associates and forms higher oligomers. Interacts with a broad range of misfolded proteins, including APP, APOC2 and LYZ. Slightly acidic pH promotes interaction with misfolded proteins. Forms high-molecular weight oligomers upon interaction with misfolded proteins. Interacts with APOA1, LRP2, CLUAP1 and PON1. Interacts with the complement membrane attack complex. Interacts (via alpha chain) with XRCC6. Interacts with SYVN1, COMMD1, BTRC, CUL1 and with ubiquitin and SCF (SKP1-CUL1-F-box protein) E3 ubiquitin-protein ligase complexes. Interacts (via alpha chain) with BAX in stressed cells, where BAX undergoes a conformation change leading to association with the mitochondrial membrane. Does not interact with BAX in unstressed cells. Found in a complex with LTF, CLU, EPPIN and SEMG1. Interacts (immaturely glycosylated pre-secreted form) with HSPA5; this interaction promotes CLU stability and facilitates stress-induced CLU retrotranslocation from the secretory pathway to the mitochondria, thereby reducing stress-induced apoptosis by stabilizing mitochondrial membrane integrity. Interacts with BCL2L1; this interaction releases and activates BAX and promotes cell death. Interacts with TGFBR2 and ACVR1. Interacts (secreted form) with STMN3; this interaction may act as an important modulator during neuronal differentiation. Interacts with VLDLR and LRP8. Post-translationally, proteolytically cleaved on its way through the secretory system, probably within the Golgi lumen. Proteolytic cleavage is not necessary for its chaperone activity. All non-secreted forms are not proteolytically cleaved. Chaperone activity of uncleaved forms is dependent on a non-reducing environment. In terms of processing, polyubiquitinated, leading to proteasomal degradation. Under cellular stress, the intracellular level of cleaved form is reduced due to proteasomal degradation. Extensively glycosylated with sulfated N-linked carbohydrates. About 30% of the protein mass is comprised of complex N-linked carbohydrate. Endoplasmic reticulum (ER) stress induces changes in glycosylation status and increases level of hypoglycosylated forms. Core carbohydrates are essential for chaperone activity. Non-secreted forms are hypoglycosylated or unglycosylated. Most abundant in stomach, liver, brain, and testis, with intermediate levels in heart, ovary and kidney.

It is found in the secreted. Its subcellular location is the nucleus. It localises to the cytoplasm. The protein localises to the mitochondrion membrane. The protein resides in the cytosol. It is found in the microsome. Its subcellular location is the endoplasmic reticulum. It localises to the mitochondrion. The protein localises to the perinuclear region. The protein resides in the cytoplasmic vesicle. It is found in the secretory vesicle. Its subcellular location is the chromaffin granule. In terms of biological role, functions as extracellular chaperone that prevents aggregation of non native proteins. Prevents stress-induced aggregation of blood plasma proteins. Inhibits formation of amyloid fibrils by APP, APOC2, B2M, CALCA, CSN3, SNCA and aggregation-prone LYZ variants (in vitro). Does not require ATP. Maintains partially unfolded proteins in a state appropriate for subsequent refolding by other chaperones, such as HSPA8/HSC70. Does not refold proteins by itself. Binding to cell surface receptors triggers internalization of the chaperone-client complex and subsequent lysosomal or proteasomal degradation. When secreted, protects cells against apoptosis and against cytolysis by complement: inhibits assembly of the complement membrane attack complex (MAC) by preventing polymerization of C9 pore component of the MAC complex. Intracellular forms interact with ubiquitin and SCF (SKP1-CUL1-F-box protein) E3 ubiquitin-protein ligase complexes and promote the ubiquitination and subsequent proteasomal degradation of target proteins. Promotes proteasomal degradation of COMMD1 and IKBKB. Modulates NF-kappa-B transcriptional activity. Following stress, promotes apoptosis. Inhibits apoptosis when associated with the mitochondrial membrane by interference with BAX-dependent release of cytochrome c into the cytoplasm. Plays a role in the regulation of cell proliferation. Following ER stress, suppresses stress-induced apoptosis by stabilizing mitochondrial membrane integrity through interaction with HSPA5. When secreted, does not affect caspase or BAX-mediated intrinsic apoptosis and TNF-induced NF-kappa-B-activity. When secreted, acts as an important modulator during neuronal differentiation through interaction with STMN3. Plays a role in the clearance of immune complexes that arise during cell injury. This Mus musculus (Mouse) protein is Clusterin.